Reading from the N-terminus, the 514-residue chain is Photosystem II CP47 reaction center protein (514 aa).

The next 6 membrane-spanning stretches (helical) occupy residues 21 to 36, 109 to 123, 148 to 164, 211 to 226, 245 to 260, and 465 to 480; these read AVHL…WAGS, IVLS…VWHW, GGHL…FGTF, IAAG…FHLT, ALAS…AFVV, and CFAL…HGAR.

This sequence belongs to the PsbB/PsbC family. PsbB subfamily. In terms of assembly, PSII is composed of 1 copy each of membrane proteins PsbA, PsbB, PsbC, PsbD, PsbE, PsbF, PsbH, PsbI, PsbJ, PsbK, PsbL, PsbM, PsbT, PsbX, PsbY, PsbZ, Psb30/Ycf12, peripheral proteins PsbO, CyanoQ (PsbQ), PsbU, PsbV and a large number of cofactors. It forms dimeric complexes. The cofactor is Binds multiple chlorophylls. PSII binds additional chlorophylls, carotenoids and specific lipids..

The protein resides in the cellular thylakoid membrane. Its function is as follows. One of the components of the core complex of photosystem II (PSII). It binds chlorophyll and helps catalyze the primary light-induced photochemical processes of PSII. PSII is a light-driven water:plastoquinone oxidoreductase, using light energy to abstract electrons from H(2)O, generating O(2) and a proton gradient subsequently used for ATP formation. In Prochlorothrix hollandica, this protein is Photosystem II CP47 reaction center protein.